The primary structure comprises 75 residues: Putative sulfur carrier protein MJ0990 (75 aa).

Cys-15 (cysteine persulfide intermediate) is an active-site residue.

This sequence belongs to the sulfur carrier protein TusA family.

In Methanocaldococcus jannaschii (strain ATCC 43067 / DSM 2661 / JAL-1 / JCM 10045 / NBRC 100440) (Methanococcus jannaschii), this protein is Putative sulfur carrier protein MJ0990.